A 218-amino-acid polypeptide reads, in one-letter code: MADVSAKLVKDLRDKTGAGMMDCKKALAESDGDMIKASEWLRKKGIASAEKKSSRIAAEGAIGTYIHTGARVGVLLELNCETDFVARGDLFQGLLKDVAMQVAACPNVEYVSTEEIPVDVVEKEKSIEMGRDDLSGKPEQMKAKIVEGRIGKRLKELVLLEQPFIRDSSMTVAELVKQVAGKIGENVQVRRFTRYTLGEGIEVDQTDFATEVASMKTA.

The interval 82–85 is involved in Mg(2+) ion dislocation from EF-Tu; the sequence is TDFV.

Belongs to the EF-Ts family.

It localises to the cytoplasm. Associates with the EF-Tu.GDP complex and induces the exchange of GDP to GTP. It remains bound to the aminoacyl-tRNA.EF-Tu.GTP complex up to the GTP hydrolysis stage on the ribosome. The chain is Elongation factor Ts from Prochlorococcus marinus (strain MIT 9303).